A 141-amino-acid chain; its full sequence is Vesicle-associated membrane protein 4 (141 aa).

Positions 1-51 (MPPKFKRHLNDDDVTGSVKSERRNLLEDDSDEEEDFFLRGPSGPRFGPRND) are disordered. Residues 1–115 (MPPKFKRHLN…RRQMWWRGCK (115 aa)) are Cytoplasmic-facing. Phosphoserine occurs at positions 17 and 30. In terms of domain architecture, v-SNARE coiled-coil homology spans 52 to 112 (KIKHVQNQVD…KQLRRQMWWR (61 aa)). Residues 116-136 (IKAIMALVAVILLLVIIILIV) traverse the membrane as a helical; Anchor for type IV membrane protein segment. The Vesicular segment spans residues 137–141 (VKYRT).

Belongs to the synaptobrevin family. In terms of assembly, identified in a complex containing STX6, STX12, VAMP4 and VTI1A. Interacts with BAIAP3; this interaction is increased in the presence of calcium.

It is found in the golgi apparatus. The protein localises to the trans-Golgi network membrane. Involved in the pathway that functions to remove an inhibitor (probably synaptotagmin-4) of calcium-triggered exocytosis during the maturation of secretory granules. May be a marker for this sorting pathway that is critical for remodeling the secretory response of granule. The chain is Vesicle-associated membrane protein 4 (VAMP4) from Bos taurus (Bovine).